The following is a 349-amino-acid chain: tRNA pseudouridine synthase D (349 aa).

Residue Phe-27 participates in substrate binding. Catalysis depends on Asp-80, which acts as the Nucleophile. Asn-129 provides a ligand contact to substrate. A TRUD domain is found at 155-303; it reads GVPNYFGAQR…VEASRRAMLL (149 aa). Phe-329 is a substrate binding site.

The protein belongs to the pseudouridine synthase TruD family.

It catalyses the reaction uridine(13) in tRNA = pseudouridine(13) in tRNA. Responsible for synthesis of pseudouridine from uracil-13 in transfer RNAs. In Salmonella choleraesuis (strain SC-B67), this protein is tRNA pseudouridine synthase D.